Here is a 119-residue protein sequence, read N- to C-terminus: Holo-[acyl-carrier-protein] synthase (119 aa).

Residues Asp-8 and Glu-53 each contribute to the Mg(2+) site.

It belongs to the P-Pant transferase superfamily. AcpS family. Mg(2+) serves as cofactor.

It localises to the cytoplasm. It carries out the reaction apo-[ACP] + CoA = holo-[ACP] + adenosine 3',5'-bisphosphate + H(+). In terms of biological role, transfers the 4'-phosphopantetheine moiety from coenzyme A to a Ser of acyl-carrier-protein. The protein is Holo-[acyl-carrier-protein] synthase of Petrotoga mobilis (strain DSM 10674 / SJ95).